A 500-amino-acid chain; its full sequence is L-arabinose isomerase (500 aa).

Residues glutamate 306, glutamate 333, histidine 350, and histidine 450 each coordinate Mn(2+).

The protein belongs to the arabinose isomerase family. In terms of assembly, homohexamer. Mn(2+) is required as a cofactor.

The enzyme catalyses beta-L-arabinopyranose = L-ribulose. The protein operates within carbohydrate degradation; L-arabinose degradation via L-ribulose; D-xylulose 5-phosphate from L-arabinose (bacterial route): step 1/3. Catalyzes the conversion of L-arabinose to L-ribulose. This Escherichia fergusonii (strain ATCC 35469 / DSM 13698 / CCUG 18766 / IAM 14443 / JCM 21226 / LMG 7866 / NBRC 102419 / NCTC 12128 / CDC 0568-73) protein is L-arabinose isomerase.